The following is a 133-amino-acid chain: ATP synthase epsilon chain, chloroplastic (133 aa).

The protein belongs to the ATPase epsilon chain family. In terms of assembly, F-type ATPases have 2 components, CF(1) - the catalytic core - and CF(0) - the membrane proton channel. CF(1) has five subunits: alpha(3), beta(3), gamma(1), delta(1), epsilon(1). CF(0) has three main subunits: a, b and c.

It localises to the plastid. The protein resides in the chloroplast thylakoid membrane. Functionally, produces ATP from ADP in the presence of a proton gradient across the membrane. This Chara vulgaris (Common stonewort) protein is ATP synthase epsilon chain, chloroplastic.